The sequence spans 303 residues: MNRGAKVKTNGDNLALSTRAKKLLTKSIDTLETIIDNDQCSPQEKATIALKILEMAGIFTEFKHHSVDKLVAKAEEKIRRLQSQYPQINLSLSEPTLHQQSESIFLPGTYGEIKNFLSPEENQKIITEAIDKKEEYIKSNTTTKANQYRQSYVLFSQKIPALSALIRERIKQKLPELLGQLNFSPFEVAEIELQLTAHNDGCYYRIHNDAGSEKTASRQITYVYYFYQEPKAFSGGELRLYDTELKNNTITTHPKFQTITPINNSIIFFNSRCRHEVMSVVCPSREFAHSRFTVNGWIRKKMN.

The Fe2OG dioxygenase domain maps to 173–300 (KLPELLGQLN…RFTVNGWIRK (128 aa)).

The cofactor is Fe(2+). L-ascorbate serves as cofactor.

This is an uncharacterized protein from Synechocystis sp. (strain ATCC 27184 / PCC 6803 / Kazusa).